The sequence spans 220 residues: MTGTIDLAGDPNIGVYARVFEDIAIVYPGAPAEFTAALARELDVEIVSTFIQGSSIIGSLVSGNSQGLVVSGLATDEELAVLSEYRDVFLLKGPMNAAGNIILANDCVAAVHPEMQIDVAEEIGSFLEVPVVRLTLGGIKTVGMAGFATNKGILVHPRANDTEIANLERIVDLPIGLGSVNMGSGLVGTGLLANSKGYVAGSVTTGFELGRIEEVFGFLE.

This sequence belongs to the eIF-6 family.

In terms of biological role, binds to the 50S ribosomal subunit and prevents its association with the 30S ribosomal subunit to form the 70S initiation complex. This is Translation initiation factor 6 from Methanoculleus marisnigri (strain ATCC 35101 / DSM 1498 / JR1).